Consider the following 166-residue polypeptide: 2-C-methyl-D-erythritol 2,4-cyclodiphosphate synthase (166 aa).

Residues Asp15 and His17 each contribute to the a divalent metal cation site. Residues 15-17 and 43-44 contribute to the 4-CDP-2-C-methyl-D-erythritol 2-phosphate site; these read DVH and HS. Position 51 (His51) interacts with a divalent metal cation. 4-CDP-2-C-methyl-D-erythritol 2-phosphate-binding positions include 65–67, 141–144, and Arg151; these read DIG and TTNE.

Belongs to the IspF family. In terms of assembly, homotrimer. A divalent metal cation is required as a cofactor.

It carries out the reaction 4-CDP-2-C-methyl-D-erythritol 2-phosphate = 2-C-methyl-D-erythritol 2,4-cyclic diphosphate + CMP. It functions in the pathway isoprenoid biosynthesis; isopentenyl diphosphate biosynthesis via DXP pathway; isopentenyl diphosphate from 1-deoxy-D-xylulose 5-phosphate: step 4/6. In terms of biological role, involved in the biosynthesis of isopentenyl diphosphate (IPP) and dimethylallyl diphosphate (DMAPP), two major building blocks of isoprenoid compounds. Catalyzes the conversion of 4-diphosphocytidyl-2-C-methyl-D-erythritol 2-phosphate (CDP-ME2P) to 2-C-methyl-D-erythritol 2,4-cyclodiphosphate (ME-CPP) with a corresponding release of cytidine 5-monophosphate (CMP). The sequence is that of 2-C-methyl-D-erythritol 2,4-cyclodiphosphate synthase from Synechococcus sp. (strain CC9311).